The following is a 1196-amino-acid chain: Sorbin and SH3 domain-containing protein 2 (1196 aa).

Disordered regions lie at residues V25–N57 and P75–G95. S27, S28, and S40 each carry phosphoserine. Positions P83–G92 are enriched in polar residues. Phosphoserine occurs at positions 130 and 143. The residue at position 148 (M148) is an Alanine amide. Residues V166–G227 enclose the SoHo domain. Positions A235–R247 are enriched in polar residues. 2 disordered regions span residues A235 to K314 and S329 to S407. Composition is skewed to basic and acidic residues over residues S252–K262 and R276–P312. S254 bears the Phosphoserine mark. Residues S329–S343 show a composition bias toward polar residues. S334, S340, S343, and S354 each carry phosphoserine. Phosphothreonine is present on T372. Phosphoserine is present on S382. Residues S382–S399 show a composition bias toward low complexity. T387 carries the phosphothreonine modification. Phosphoserine occurs at positions 392, 393, 394, 396, 397, 399, 478, 589, 592, 645, 648, 844, and 938. Residues Q929–K958 are disordered. Over residues V948–K958 the composition is skewed to basic and acidic residues. SH3 domains lie at E959–P1018 and G1034–R1095. Phosphoserine occurs at positions 1113 and 1119. The 60-residue stretch at G1137–L1196 folds into the SH3 3 domain.

In terms of assembly, interacts with ABL1/c-Abl, ABL2/v-Abl/Arg, ACTN, CBL and PALLD. Interacts with ABL, CBL, DNM1, DNM2, FLOT1, AFDN, PTK2B/PYK2, SAPAP, SPTAN1, SYNJ1, SYNJ2, VCL/vinculin and WASF. Interacts with PTPN12 and WASF1 via its SH3 domains; this interaction may mediate the partial PTPN12 and WASF1 translocation to focal adhesion sites. Ubiquitinated by CBL. As to expression, expressed in brain; found in synapses in cerebellum.

Its subcellular location is the cytoplasm. The protein localises to the perinuclear region. The protein resides in the apical cell membrane. It is found in the cell junction. It localises to the focal adhesion. Its subcellular location is the cell projection. The protein localises to the lamellipodium. Functionally, adapter protein that plays a role in the assembling of signaling complexes, being a link between ABL kinases and actin cytoskeleton. Can form complex with ABL1 and CBL, thus promoting ubiquitination and degradation of ABL1. May play a role in the regulation of pancreatic cell adhesion, possibly by acting on WASF1 phosphorylation, enhancing phosphorylation by ABL1, as well as dephosphorylation by PTPN12. Isoform 2 increases water and sodium absorption in the intestine and gall-bladder. The sequence is that of Sorbin and SH3 domain-containing protein 2 (Sorbs2) from Rattus norvegicus (Rat).